A 212-amino-acid polypeptide reads, in one-letter code: MQLFHLCLIISCSCPTVQASKLCLGWLLGMDIDPYKEFGATVELLSFLPSDFFPSVRDLLDTASALYREALESPEHCSPNHTALRQAILCWGELMTLASWVGNNLEDPASREQVVNYVNTNMGLKIRQLLWFHISCLTFGRETVLEYLVSFGVWIRTPPAYRPPNAPILSTLPETAVVRRRGRSPRRRTPSPRRRRSQSPRRRRSQSPASQC.

An N-terminal signal peptide occupies residues methionine 1 to alanine 19. The interval glycine 25–leucine 27 is HBEAG. The tract at residues leucine 172 to cysteine 212 is disordered. The span at valine 178–serine 205 shows a compositional bias: basic residues. A 1; half-length repeat occupies serine 184–proline 190. The interval serine 184–glutamine 206 is 3 X 8 AA repeats of S-P-R-R-R-R-S-Q. A propeptide spanning residues serine 184–cysteine 212 is cleaved from the precursor. A run of 2 repeats spans residues serine 191–glutamine 198 and serine 199–glutamine 206.

This sequence belongs to the orthohepadnavirus precore antigen family. In terms of assembly, homodimerizes. In terms of processing, phosphorylated. Post-translationally, cleaved by host furin.

The protein resides in the secreted. The protein localises to the host nucleus. Its function is as follows. May regulate immune response to the intracellular capsid in acting as a T-cell tolerogen, by having an immunoregulatory effect which prevents destruction of infected cells by cytotoxic T-cells. This immune regulation may predispose to chronicity during perinatal infections and prevent severe liver injury during adult infections. The chain is External core antigen from Gorilla gorilla (western gorilla).